Consider the following 274-residue polypeptide: Penicillin-insensitive murein endopeptidase (274 aa).

The first 19 residues, 1-19 (MNKTAIALLALLASSASLA), serve as a signal peptide directing secretion. 3 cysteine pairs are disulfide-bonded: Cys-44–Cys-265, Cys-187–Cys-235, and Cys-216–Cys-223. Residues His-110, His-113, Asp-120, Asp-147, His-150, and His-211 each coordinate Zn(2+). The tract at residues 227–274 (PLPPPGDGCGAELQSWFEPPKPGTTKPEKKTPPPLPPSCQALLDEHVI) is disordered.

The protein belongs to the peptidase M74 family. Dimer. It depends on Zn(2+) as a cofactor.

It is found in the periplasm. Its function is as follows. Murein endopeptidase that cleaves the D-alanyl-meso-2,6-diamino-pimelyl amide bond that connects peptidoglycan strands. Likely plays a role in the removal of murein from the sacculus. This is Penicillin-insensitive murein endopeptidase from Escherichia coli (strain SE11).